A 675-amino-acid polypeptide reads, in one-letter code: Cysteine-rich receptor-like protein kinase 25 (675 aa).

A signal peptide spans 1-25 (MSSCFKSSVSLFSVFLFMILKTVTS). The Extracellular segment spans residues 26–281 (DPTYLYHICP…IPSEKGKGKN (256 aa)). Gnk2-homologous domains follow at residues 28–134 (TYLY…NQSI) and 140–247 (IRPG…LYPF). N-linked (GlcNAc...) asparagine glycans are attached at residues Asn36, Asn43, Asn77, Asn106, Asn131, Asn151, Asn161, Asn188, Asn249, and Asn281. A helical membrane pass occupies residues 282–302 (LTVIVTAIAVPVSVCVLLLGA). Over 303 to 675 (MCWLLARRRN…DSSITIVYPR (373 aa)) the chain is Cytoplasmic. Residues 347 to 622 (FSESNKLGHG…DILVMMNSFT (276 aa)) form the Protein kinase domain. Residues 353–361 (LGHGGFGEV) and Lys375 contribute to the ATP site. A Phosphotyrosine modification is found at Tyr420. Asp472 functions as the Proton acceptor in the catalytic mechanism. Ser476 is modified (phosphoserine). Thr512 is subject to Phosphothreonine. The residue at position 520 (Tyr520) is a Phosphotyrosine. Residues 638 to 661 (MKDSRDPRSGGSASDHSATSKSLP) are disordered. The segment covering 648–661 (GSASDHSATSKSLP) has biased composition (polar residues).

This sequence belongs to the protein kinase superfamily. Ser/Thr protein kinase family. CRK subfamily.

It localises to the membrane. It catalyses the reaction L-seryl-[protein] + ATP = O-phospho-L-seryl-[protein] + ADP + H(+). The enzyme catalyses L-threonyl-[protein] + ATP = O-phospho-L-threonyl-[protein] + ADP + H(+). The chain is Cysteine-rich receptor-like protein kinase 25 (CRK25) from Arabidopsis thaliana (Mouse-ear cress).